The chain runs to 452 residues: Tubulin alpha-8 chain (452 aa).

Positions 15, 74, 143, 147, 148, 182, 209, and 231 each coordinate GTP. Position 74 (Glu-74) interacts with Mg(2+). Glu-257 is a catalytic residue.

This sequence belongs to the tubulin family. As to quaternary structure, dimer of alpha and beta chains. A typical microtubule is a hollow water-filled tube with an outer diameter of 25 nm and an inner diameter of 15 nM. Alpha-beta heterodimers associate head-to-tail to form protofilaments running lengthwise along the microtubule wall with the beta-tubulin subunit facing the microtubule plus end conferring a structural polarity. Microtubules usually have 13 protofilaments but different protofilament numbers can be found in some organisms and specialized cells. Mg(2+) is required as a cofactor.

The protein resides in the cytoplasm. It is found in the cytoskeleton. It carries out the reaction GTP + H2O = GDP + phosphate + H(+). Its function is as follows. Tubulin is the major constituent of microtubules, a cylinder consisting of laterally associated linear protofilaments composed of alpha- and beta-tubulin heterodimers. Microtubules grow by the addition of GTP-tubulin dimers to the microtubule end, where a stabilizing cap forms. Below the cap, tubulin dimers are in GDP-bound state, owing to GTPase activity of alpha-tubulin. The chain is Tubulin alpha-8 chain (tba-8) from Caenorhabditis elegans.